A 165-amino-acid polypeptide reads, in one-letter code: UPF0114 protein in repA1-repA2 intergenic region (165 aa).

3 helical membrane-spanning segments follow: residues 15–35, 53–73, and 136–156; these read LMFP…VKFF, LVLI…LVMV, and IMWC…MAYI.

The protein belongs to the UPF0114 family.

It localises to the cell membrane. The chain is UPF0114 protein in repA1-repA2 intergenic region from Buchnera aphidicola subsp. Thelaxes suberi.